We begin with the raw amino-acid sequence, 597 residues long: Gamma-terpinene synthase, chloroplastic (597 aa).

A chloroplast-targeting transit peptide spans 1 to 47 (MATLSMQVSILSKQVKNLNSFGMRASKLPMVARRVDVSTTRLRPICS). The Mn(2+) site is built by aspartate 350 and aspartate 354. The DDXXD motif motif lies at 350–354 (DDVYD). 2 homodimerization regions span residues 356–362 (YGTLDEL) and 428–465 (EAKW…FTLP). 2 residues coordinate Mn(2+): aspartate 494 and glutamate 502.

This sequence belongs to the terpene synthase family. Homodimer. Mn(2+) serves as cofactor. Mg(2+) is required as a cofactor.

It is found in the plastid. It localises to the chloroplast. It catalyses the reaction (2E)-geranyl diphosphate = gamma-terpinene + diphosphate. Its pathway is secondary metabolite biosynthesis; terpenoid biosynthesis. Functionally, involved in the biosynthesis of phenolic monoterpenes natural products thymol and carvacrol which have a broad range of biological activities acting as antimicrobial compounds, insecticides, antioxidants and pharmaceutical agents. Monoterpene synthase which catalyzes the conversion of geranyl diphosphate (GPP) to gamma-terpinene and minor amounts of other monoterpenes (e.g. alpha-thujene, alpha-terpinene, myrcene, sabinene, (+)-R-limonene, alpha-pinene and alpha-phellandrene). This chain is Gamma-terpinene synthase, chloroplastic, found in Thymus caespititius (Cretan thyme).